A 771-amino-acid polypeptide reads, in one-letter code: MDATQITLVRESGHICAASIYTSWTQSGQLTQNGLSVLYYLLCKNSCGKYVPKFAEITVQQEDLCRYSRHGGSVSAATFASICRAASSAALDAWPLEPLGNADTWRCLHGTALATLRRVLGFKSFYSPVTFETDTNTGLLLKTIPDEHALNNDNTPSTGVLRANFPVAIDVSAVSACNAHTQGTSLAYARLTALKSNGDTQQQTPLDVEVITPKAYIRRKYKSTFSPPIEREGQTSDLFNLEERRLVLSGNRAIVVRVLLPCYFDCLTTDSTVTSSLSILATYRLWYAAAFGKPGVVRPIFAYLGPELNPKGEDRDYFCTVGFPGWTTLRTQTPAVESIRTATEMYMETDGLWPVTGIQAFHYLAPWGQHPPLPPRVQDLIGQIPQDTGHADATVNWDAGRISTVFKQPVQLQDRWMAKFDFSAFFPTIYCAMFPMHFRLGKIVLARMRRGMGCLKPALVSFFGGLRHILPSIYKAIIFIANEISLCVEQTALEQGFAICTYIKDGFWGIFTDLHTRNVCSDQARCSALNLAATCERAVTGLLRIQLGLNFTPAMEPVLRVEGVYTHAFTWCTTGSWLWNLQTNTPPDLVGVPWRSQAARDLKERLSGLLCTATKIRERIQENCIWDHVLYDIWAGQVVEAARKTYVDFFEHVFDRRYTPVYWSLQEQNSETKAIPASYLTYGHMQDKDYKPRQIIMVRNPNPHGPPTVVYWELLPSCACIPPIDCAAHLKPLIHTFVTIINHLLDAHNDFSSPSLKFTDDPLASYNFLFL.

The protein belongs to the herpesviridae HEPA family. Associates with the primase and the helicase to form the helicase-primase complex. Interacts with the origin-binding protein. Interacts with the polymerase catalytic subunit.

Its subcellular location is the host nucleus. Functionally, component of the helicase/primase complex. Unwinds the DNA at the replication forks and generates single-stranded DNA for both leading and lagging strand synthesis. The primase synthesizes short RNA primers on the lagging strand that the polymerase presumably elongates using dNTPs. The primase-associated factor has no known catalytic activity in the complex and may serve to facilitate the formation of the replisome by directly interacting with the origin-binding protein and the polymerase. The chain is DNA helicase/primase complex-associated protein from Homo sapiens (Human).